Reading from the N-terminus, the 539-residue chain is GMP synthase [glutamine-hydrolyzing] (539 aa).

Positions 4–202 constitute a Glutamine amidotransferase type-1 domain; the sequence is KILILDFGSQ…VLQIAGCKPD (199 aa). Cys81 acts as the Nucleophile in catalysis. Active-site residues include His176 and Glu178. One can recognise a GMPS ATP-PPase domain in the interval 203–395; the sequence is WVMRDHIEEA…LGLPPEMVYR (193 aa). 230–236 contributes to the ATP binding site; sequence SGGVDSS.

As to quaternary structure, homodimer.

It catalyses the reaction XMP + L-glutamine + ATP + H2O = GMP + L-glutamate + AMP + diphosphate + 2 H(+). The protein operates within purine metabolism; GMP biosynthesis; GMP from XMP (L-Gln route): step 1/1. Catalyzes the synthesis of GMP from XMP. The sequence is that of GMP synthase [glutamine-hydrolyzing] from Cupriavidus taiwanensis (strain DSM 17343 / BCRC 17206 / CCUG 44338 / CIP 107171 / LMG 19424 / R1) (Ralstonia taiwanensis (strain LMG 19424)).